The primary structure comprises 316 residues: HPr kinase/phosphorylase (316 aa).

Catalysis depends on residues His143 and Lys164. 158 to 165 (GEAGSGKS) contacts ATP. Residue Ser165 coordinates Mg(2+). The Proton acceptor; for phosphorylation activity. Proton donor; for dephosphorylation activity role is filled by Asp182. Residues 206–215 (LEVRGLGVLN) form an important for the catalytic mechanism of both phosphorylation and dephosphorylation region. Glu207 provides a ligand contact to Mg(2+). Arg251 is a catalytic residue. The tract at residues 272 to 277 (PVMPGR) is important for the catalytic mechanism of dephosphorylation.

It belongs to the HPrK/P family. In terms of assembly, homohexamer. Mg(2+) is required as a cofactor.

It catalyses the reaction [HPr protein]-L-serine + ATP = [HPr protein]-O-phospho-L-serine + ADP + H(+). The enzyme catalyses [HPr protein]-O-phospho-L-serine + phosphate + H(+) = [HPr protein]-L-serine + diphosphate. In terms of biological role, catalyzes the ATP- as well as the pyrophosphate-dependent phosphorylation of a specific serine residue in HPr, a phosphocarrier protein of the phosphoenolpyruvate-dependent sugar phosphotransferase system (PTS). HprK/P also catalyzes the pyrophosphate-producing, inorganic phosphate-dependent dephosphorylation (phosphorolysis) of seryl-phosphorylated HPr (P-Ser-HPr). This is HPr kinase/phosphorylase from Stenotrophomonas maltophilia (strain K279a).